The chain runs to 846 residues: Integrin beta-PS (846 aa).

The signal sequence occupies residues 1 to 28 (MILERNRRCQLALLMIAILAAIAGQTDA). Over 29-777 (QKAAKLTAVS…NKECPAKVFM (749 aa)) the chain is Extracellular. The cysteines at positions 46 and 55 are disulfide-linked. Asn72 carries N-linked (GlcNAc...) asparagine glycosylation. One can recognise a VWFA domain in the interval 186–419 (DLYYLMDLSK…ELVKEEYRKI (234 aa)). Cys249 and Cys252 are joined by a disulfide. N-linked (GlcNAc...) asparagine glycosylation is found at Asn266 and Asn277. A disulfide bridge connects residues Cys300 and Cys341. Residues Asn403 and Asn428 are each glycosylated (N-linked (GlcNAc...) asparagine). Disulfide bonds link Cys441–Cys453, Cys473–Cys741, Cys507–Cys530, Cys522–Cys533, Cys535–Cys544, Cys546–Cys579, Cys561–Cys577, Cys571–Cys582, Cys584–Cys599, Cys601–Cys624, Cys606–Cys622, Cys614–Cys627, Cys629–Cys638, Cys640–Cys664, Cys647–Cys662, Cys656–Cys667, Cys669–Cys682, Cys685–Cys688, Cys692–Cys701, Cys698–Cys771, and Cys719–Cys749. I-EGF domains are found at residues 507 to 545 (CENPGSIGYQVQANSCSGHGTSMCGICNCDDSYFGNKCE), 546 to 600 (CSAT…KHCE), 601 to 639 (CDNFSCERNRNQLCSGPDHGTCECGRCKCKPGWTGSNCG), and 640 to 683 (CQES…RHCE). Asn557 is a glycosylation site (N-linked (GlcNAc...) asparagine). Residue Asn603 is glycosylated (N-linked (GlcNAc...) asparagine). The N-linked (GlcNAc...) asparagine glycan is linked to Asn644. Asn718 carries an N-linked (GlcNAc...) asparagine glycan. Residues 778–798 (LGIVMGVIAAIVLVGLAILLL) traverse the membrane as a helical segment. Over 799–846 (WKLLTTIHDRREFARFEKERMNAKWDTGENPIYKQATSTFKNPMYAGK) the chain is Cytoplasmic. Residues Tyr831 and Tyr843 each carry the phosphotyrosine modification.

The protein belongs to the integrin beta chain family. In terms of assembly, heterodimer of an alpha and a beta subunit. Beta-PS associates with either alpha-PS1, alpha-PS2, alpha-PS3, alpha-PS4 or alpha-PS5. As to expression, in ovaries, strongly expressed in follicle cells. In oocytes, expressed in the forming dorsal appendages (at protein level). Expressed in the embryonic dorsal cuticle, the larval eye and the wing imaginal disk. In testes, detected at the interface between somatic hub cells and cyst stem cells.

The protein resides in the cell membrane. Its subcellular location is the apical cell membrane. The protein localises to the lateral cell membrane. It localises to the basal cell membrane. Its function is as follows. Integrin alpha-PS1/beta-PS is a receptor for laminin. Integrin alpha-PS2/beta-PS is a receptor for Tig, wb and Ten-m. Contributes to endodermal integrity and adhesion between the midgut epithelium and the surrounding visceral muscle. Essential for migration of the primordial midgut cells and for maintaining, but not establishing, cell polarity in the midgut epithelium. The two beta subunits mediate midgut migration by distinct mechanisms: beta-PS requires rhea/talin and Itgbn does not. Required for rhea/talin correct cellular localization in the midgut. Required for many embryonic (dorsal closure and somatic muscle attachments) and postembryonic developmental processes (attachment between cell layers of imaginal disks, organization of ommatidial arrays and flight muscle development). Involved in the function and/or development of the olfactory system. In the testes, essential for shv-dependent maintenance of somatic hub cells and their localization to the apical tip. Plays a role in timely border cell migration during oogenesis. This chain is Integrin beta-PS (mys), found in Drosophila melanogaster (Fruit fly).